The sequence spans 79 residues: D-alanyl carrier protein (79 aa).

One can recognise a Carrier domain in the interval 1–76 (MEEQVLSLLE…RVMAYVKKRV (76 aa)). Ser34 is subject to O-(pantetheine 4'-phosphoryl)serine.

It belongs to the DltC family. Post-translationally, 4'-phosphopantetheine is transferred from CoA to a specific serine of apo-DCP.

It is found in the cytoplasm. It participates in cell wall biogenesis; lipoteichoic acid biosynthesis. In terms of biological role, carrier protein involved in the D-alanylation of lipoteichoic acid (LTA). The loading of thioester-linked D-alanine onto DltC is catalyzed by D-alanine--D-alanyl carrier protein ligase DltA. The DltC-carried D-alanyl group is further transferred to cell membrane phosphatidylglycerol (PG) by forming an ester bond, probably catalyzed by DltD. D-alanylation of LTA plays an important role in modulating the properties of the cell wall in Gram-positive bacteria, influencing the net charge of the cell wall. The protein is D-alanyl carrier protein of Abiotrophia defectiva (Streptococcus defectivus).